The following is a 311-amino-acid chain: Probable flavin reductase (311 aa).

FMN-binding positions include 38-41 (TANS), 55-61 (CLAKSSR), 88-89 (FA), and Arg-95.

The protein belongs to the non-flavoprotein flavin reductase family.

The protein is Probable flavin reductase of Rhizobium meliloti (strain 1021) (Ensifer meliloti).